A 104-amino-acid polypeptide reads, in one-letter code: Replication restart protein PriB (104 aa).

The SSB domain maps to 1 to 101 (MTNRLALSGT…LHAEQIELID (101 aa)).

It belongs to the PriB family. In terms of assembly, homodimer. Interacts with PriA and DnaT. Component of the replication restart primosome. Primosome assembly occurs via a 'hand-off' mechanism. PriA binds to replication forks, subsequently PriB then DnaT bind; DnaT then displaces ssDNA to generate the helicase loading substrate.

Functionally, involved in the restart of stalled replication forks, which reloads the replicative helicase on sites other than the origin of replication; the PriA-PriB pathway is the major replication restart pathway. During primosome assembly it facilitates complex formation between PriA and DnaT on DNA; stabilizes PriA on DNA. Stimulates the DNA unwinding activity of PriA helicase. The polypeptide is Replication restart protein PriB (Citrobacter koseri (strain ATCC BAA-895 / CDC 4225-83 / SGSC4696)).